A 98-amino-acid chain; its full sequence is NADH-ubiquinone oxidoreductase chain 4L (98 aa).

3 consecutive transmembrane segments (helical) span residues 1–21, 29–49, and 58–78; these read MPLI…GMLV, SLLC…LMTL, and IMPI…LALL.

Belongs to the complex I subunit 4L family. In terms of assembly, core subunit of respiratory chain NADH dehydrogenase (Complex I) which is composed of 45 different subunits.

The protein localises to the mitochondrion inner membrane. The enzyme catalyses a ubiquinone + NADH + 5 H(+)(in) = a ubiquinol + NAD(+) + 4 H(+)(out). Core subunit of the mitochondrial membrane respiratory chain NADH dehydrogenase (Complex I) which catalyzes electron transfer from NADH through the respiratory chain, using ubiquinone as an electron acceptor. Part of the enzyme membrane arm which is embedded in the lipid bilayer and involved in proton translocation. The protein is NADH-ubiquinone oxidoreductase chain 4L (MT-ND4L) of Pongo abelii (Sumatran orangutan).